Here is a 227-residue protein sequence, read N- to C-terminus: MMNIILKISGKFFDEDNVDNLIVLRQSIKELADNGFRVGIVTGGGSTARRYIKLAREIGIGEAYLDLLGIWASRLNAYLVMFSLQDLAYMHVPQSLEEFIQDWSHGKVVVTGGFQPGQSTAAVAALVAEASSSKTLVVATNVDGVYEKDPRIYADVKLIPHLTTQDLRKILEGSQSVQAGTYELLDPLAIKIVERSKIRVIVMNYRKLNRIIDILKGEEVSSIIEPV.

7-11 (KISGK) lines the ATP pocket. Glycine 44 contacts UMP. ATP is bound by residues glycine 45 and arginine 49. UMP-binding positions include aspartate 66 and 114–120 (FQPGQST). Threonine 140, asparagine 141, tyrosine 146, and aspartate 149 together coordinate ATP.

It belongs to the UMP kinase family. As to quaternary structure, homohexamer.

It localises to the cytoplasm. It catalyses the reaction UMP + ATP = UDP + ADP. It participates in pyrimidine metabolism; CTP biosynthesis via de novo pathway; UDP from UMP (UMPK route): step 1/1. Unlike most bacteria, is not activated by GTP. UTP acts as a competitive inhibitor against both substrates. High concentration of UMP abolishes the inhibition of UTP at low ATP concentrations, indicating that UTP binds to the acceptor site (UMP site). Functionally, catalyzes the reversible phosphorylation of UMP to UDP, with ATP as the most efficient phosphate donor. Is also able to phosphorylate dUMP, although much less efficiently. The sequence is that of Uridylate kinase (pyrH) from Saccharolobus solfataricus (strain ATCC 35092 / DSM 1617 / JCM 11322 / P2) (Sulfolobus solfataricus).